Here is a 78-residue protein sequence, read N- to C-terminus: Exodeoxyribonuclease 7 small subunit (78 aa).

It belongs to the XseB family. Heterooligomer composed of large and small subunits.

It is found in the cytoplasm. It carries out the reaction Exonucleolytic cleavage in either 5'- to 3'- or 3'- to 5'-direction to yield nucleoside 5'-phosphates.. Bidirectionally degrades single-stranded DNA into large acid-insoluble oligonucleotides, which are then degraded further into small acid-soluble oligonucleotides. The chain is Exodeoxyribonuclease 7 small subunit from Synechococcus sp. (strain JA-2-3B'a(2-13)) (Cyanobacteria bacterium Yellowstone B-Prime).